Here is a 343-residue protein sequence, read N- to C-terminus: Methylthioribose-1-phosphate isomerase (343 aa).

Residues 44–46 (RGA), Arg-85, and Gln-192 each bind substrate. Catalysis depends on Asp-233, which acts as the Proton donor. 243–244 (NK) contributes to the substrate binding site.

The protein belongs to the eIF-2B alpha/beta/delta subunits family. MtnA subfamily.

It carries out the reaction 5-(methylsulfanyl)-alpha-D-ribose 1-phosphate = 5-(methylsulfanyl)-D-ribulose 1-phosphate. It participates in amino-acid biosynthesis; L-methionine biosynthesis via salvage pathway; L-methionine from S-methyl-5-thio-alpha-D-ribose 1-phosphate: step 1/6. In terms of biological role, catalyzes the interconversion of methylthioribose-1-phosphate (MTR-1-P) into methylthioribulose-1-phosphate (MTRu-1-P). The chain is Methylthioribose-1-phosphate isomerase from Carboxydothermus hydrogenoformans (strain ATCC BAA-161 / DSM 6008 / Z-2901).